A 247-amino-acid polypeptide reads, in one-letter code: ATP synthase subunit a, chloroplastic (247 aa).

5 helical membrane passes run 38–58 (QVLITSWVVIAILLGSVTLAV), 95–115 (VPFIGTMFLFIFVSNWSGALL), 134–154 (INTTVALALLTSVAYFYAGLS), 199–219 (LVVVVLVSLVPLVVPIPVMFL), and 220–240 (GLFTSGIQALIFATLAAAYIG).

The protein belongs to the ATPase A chain family. F-type ATPases have 2 components, CF(1) - the catalytic core - and CF(0) - the membrane proton channel. CF(1) has five subunits: alpha(3), beta(3), gamma(1), delta(1), epsilon(1). CF(0) has four main subunits: a, b, b' and c.

The protein resides in the plastid. Its subcellular location is the chloroplast thylakoid membrane. Its function is as follows. Key component of the proton channel; it plays a direct role in the translocation of protons across the membrane. The protein is ATP synthase subunit a, chloroplastic of Lemna minor (Common duckweed).